The sequence spans 142 residues: Large ribosomal subunit protein uL13 (142 aa).

This sequence belongs to the universal ribosomal protein uL13 family. As to quaternary structure, part of the 50S ribosomal subunit.

Its function is as follows. This protein is one of the early assembly proteins of the 50S ribosomal subunit, although it is not seen to bind rRNA by itself. It is important during the early stages of 50S assembly. The protein is Large ribosomal subunit protein uL13 of Pseudomonas syringae pv. syringae (strain B728a).